The following is a 704-amino-acid chain: Zinc finger CCHC domain-containing protein 8 (704 aa).

Residue Ala2 is modified to N-acetylalanine. Positions 16-33 (FDHPEESIPEPVHTRFKD) are enriched in basic and acidic residues. A disordered region spans residues 16-43 (FDHPEESIPEPVHTRFKDDDEEDENGVG). Positions 43 to 78 (GDAELRERLRQCEETIEQLRAENQELKRKLNILTRP) form a coiled coil. The segment at 225–242 (PHCFNCGSEEHQMKDCPM) adopts a CCHC-type zinc-finger fold. 2 RBM7 binding regions span residues 284–297 (FKPGVISEELQDAL) and 307–322 (FIYRMRQLGYPPGWLK). Phosphothreonine is present on Thr340. Disordered stretches follow at residues 407 to 516 (APGV…LTLE) and 529 to 599 (LEQA…SPDC). Lys411 is covalently cross-linked (Glycyl lysine isopeptide (Lys-Gly) (interchain with G-Cter in SUMO2)). Low complexity predominate over residues 454 to 463 (SQSSESFQFQ). Residues 464–494 (PPLPPDTPPLPRGTPPPIFTPPLPKGTPPLT) show a composition bias toward pro residues. 4 positions are modified to phosphothreonine: Thr470, Thr477, Thr483, and Thr490. Residues 514 to 538 (TLEELEEQQRRIWAALEQAESLNSD) adopt a coiled-coil conformation. The span at 547-557 (LTGNSVASSPC) shows a compositional bias: polar residues. Phosphothreonine is present on Thr575. Phosphoserine is present on Ser596. Position 645 is a phosphothreonine (Thr645). Ser646, Ser655, and Ser692 each carry phosphoserine. An MTREX binding region spans residues 656-704 (PIPDMSKFATGITPFEFENMAESTGMYLRIRSLLKNSPRNQQKNKKASE).

It belongs to the ZCCHC8 family. In terms of assembly, component of a nuclear TRAMP-like complex, an ATP-dependent exosome regulatory complex consisting of a helicase (MTREX), an oligadenylate polymerase (TENT4B or TENT4A), and a substrate specific RNA-binding factor (ZCCHC7 or ZCCHC8). Several TRAMP-like complexes exist with specific compositions and are associated with nuclear, or nucleolar RNA exosomes. Identified in the spliceosome C complex. Component of the nuclear exosome targeting (NEXT) complex composed of MTREX, ZCCHC8, and RBM7 that directs a subset of non-coding short-lived RNAs for exosomal degradation. Interacts with proteins involved in RNA processing and degradation such as MTREX and RBM7; interaction with MTREX enhances MTREX RNA helicase activity and bridges between RBM7 and MTREX. Interacts with TERC, the telomerase RNA component. Post-translationally, phosphorylation at Thr-490 by GSK3 is triggered in cells entering mitosis.

Its subcellular location is the nucleus. It is found in the nucleoplasm. Scaffolding subunit of the trimeric nuclear exosome targeting (NEXT) complex that is involved in the surveillance and turnover of aberrant transcripts and non-coding RNAs. NEXT functions as an RNA exosome cofactor that directs a subset of non-coding short-lived RNAs for exosomal degradation. May be involved in pre-mRNA splicing. It is required for 3'-end maturation of telomerase RNA component (TERC), TERC 3'-end targeting to the nuclear RNA exosome, and for telomerase function. The chain is Zinc finger CCHC domain-containing protein 8 (ZCCHC8) from Pongo abelii (Sumatran orangutan).